Here is a 208-residue protein sequence, read N- to C-terminus: Ras-related protein Rab-6A (208 aa).

Position 2 is an N-acetylserine (Ser2). GTP is bound by residues Ser23, Val24, Gly25, Lys26, Thr27, Ser28, Asp39, Asn40, Tyr42, and Thr45. A Mg(2+)-binding site is contributed by Thr27. The Switch 1 signature appears at 32 to 50 (RFMYDSFDNTYQATIGIDF). 2 residues coordinate Mg(2+): Thr45 and Asp68. Positions 69 to 88 (TAGQERFRSLIPSYIRDSAA) match the Switch 2 motif. Positions 71, 126, 127, 129, 156, 157, and 158 each coordinate GTP. 2 S-geranylgeranyl cysteine lipidation sites follow: Cys206 and Cys208. A Cysteine methyl ester modification is found at Cys208.

The protein belongs to the small GTPase superfamily. Rab family. Mg(2+) serves as cofactor.

The protein localises to the golgi apparatus membrane. It carries out the reaction GTP + H2O = GDP + phosphate + H(+). Regulated by guanine nucleotide exchange factors (GEFs) which promote the exchange of bound GDP for free GTP. Regulated by GTPase activating proteins (GAPs) which increase the GTP hydrolysis activity. Inhibited by GDP dissociation inhibitors (GDIs). Functionally, the small GTPases Rab are key regulators of intracellular membrane trafficking, from the formation of transport vesicles to their fusion with membranes. Rabs cycle between an inactive GDP-bound form and an active GTP-bound form that is able to recruit to membranes different sets of downstream effectors directly responsible for vesicle formation, movement, tethering and fusion. RAB6A acts as a regulator of COPI-independent retrograde transport from the Golgi apparatus towards the endoplasmic reticulum (ER). This chain is Ras-related protein Rab-6A (RAB6A), found in Gallus gallus (Chicken).